A 250-amino-acid chain; its full sequence is Isoprenyl transferase (250 aa).

The active site involves Asp27. Asp27 provides a ligand contact to Mg(2+). Substrate-binding positions include Gly28 to Arg31, Trp32, His48, and Ser76 to Glu78. Residue Asn79 is the Proton acceptor of the active site. Residues Phe80, Arg82, Arg199, and Arg205 to Ser207 contribute to the substrate site. Glu218 contributes to the Mg(2+) binding site.

It belongs to the UPP synthase family. As to quaternary structure, homodimer. The cofactor is Mg(2+).

Its function is as follows. Catalyzes the condensation of isopentenyl diphosphate (IPP) with allylic pyrophosphates generating different type of terpenoids. This is Isoprenyl transferase from Chlamydia abortus (strain DSM 27085 / S26/3) (Chlamydophila abortus).